Consider the following 862-residue polypeptide: Linoleate 9S-lipoxygenase 1 (862 aa).

One can recognise a PLAT domain in the interval 44–171 (FGAATDIVGG…SYKRDRIFFA (128 aa)). One can recognise a Lipoxygenase domain in the interval 174–862 (TYLPNETPAS…FRGIPNSISI (689 aa)). The segment at 225–257 (KNLARTTLGGSSDFPYPRRGRTGRKSTRKDPKC) is disordered. The span at 242 to 251 (RRGRTGRKST) shows a compositional bias: basic residues. Positions 522, 527, 713, 717, and 862 each coordinate Fe cation.

The protein belongs to the lipoxygenase family. Monomer. Requires Fe cation as cofactor.

It is found in the cytoplasm. It catalyses the reaction (9Z,12Z)-octadecadienoate + O2 = (13S)-hydroperoxy-(9Z,11E)-octadecadienoate. The catalysed reaction is (9Z,12Z,15Z)-octadecatrienoate + O2 = (13S)-hydroperoxy-(9Z,11E,15Z)-octadecatrienoate. The enzyme catalyses (9Z,12Z)-octadecadienoate + O2 = (9S)-hydroperoxy-(10E,12Z)-octadecadienoate. The protein operates within lipid metabolism; oxylipin biosynthesis. Functionally, plant lipoxygenase may be involved in a number of diverse aspects of plant physiology including growth and development, pest resistance, and senescence or responses to wounding. It catalyzes the hydroperoxidation of lipids containing a cis,cis-1,4-pentadiene structure. The protein is Linoleate 9S-lipoxygenase 1 (LOXA) of Phaseolus vulgaris (Kidney bean).